Reading from the N-terminus, the 347-residue chain is MNPSIFIILLTTLILGTMMVITSSHWLLAWIGFEMNMMAFIPIMMKNPSPRATEASTKYLLTQATASALLMMAVIINLMYSGQWTITKLFNPTASTLMTVALAIKLGLAPFHFWVPEVTQGIPLTTGLILLTWQKLAPLSILYQISPSINLYLMLTMSLLSILVGGWGGLNQTQLRKIMAYSSIAHMGWMTTILPYNPTLTLLNLLIYITMTFTMFMLFIQNSTTTTLSLSQTWNKTPIITTLTMLTLLSMGGLPPLSGFMPKWMIIQELTKNDILIMPTFMAITALLNLYFYMRLTYSTALTLFPSTNNMKMKWQFSPTKRAPLLPTAIVISTMLLPLTPMLSILL.

Transmembrane regions (helical) follow at residues 1–21 (MNPS…MMVI), 25–45 (HWLL…PIMM), 59–79 (YLLT…INLM), 96–116 (TLMT…FWVP), 122–142 (IPLT…LSIL), 149–169 (INLY…GWGG), 200–220 (LTLL…MLFI), 239–259 (IITT…PLSG), 274–294 (DILI…YFYM), and 325–345 (LLPT…MLSI).

This sequence belongs to the complex I subunit 2 family. In terms of assembly, core subunit of respiratory chain NADH dehydrogenase (Complex I) which is composed of 45 different subunits. Interacts with TMEM242.

The protein resides in the mitochondrion inner membrane. It catalyses the reaction a ubiquinone + NADH + 5 H(+)(in) = a ubiquinol + NAD(+) + 4 H(+)(out). In terms of biological role, core subunit of the mitochondrial membrane respiratory chain NADH dehydrogenase (Complex I) which catalyzes electron transfer from NADH through the respiratory chain, using ubiquinone as an electron acceptor. Essential for the catalytic activity and assembly of complex I. The protein is NADH-ubiquinone oxidoreductase chain 2 of Balaenoptera musculus (Blue whale).